We begin with the raw amino-acid sequence, 279 residues long: Acetyl-coenzyme A carboxylase carboxyl transferase subunit beta (279 aa).

The region spanning 23 to 279 (LWSKCDECGA…LIKLFKHLRG (257 aa)) is the CoA carboxyltransferase N-terminal domain. Positions 27, 30, 46, and 49 each coordinate Zn(2+). A C4-type zinc finger spans residues 27 to 49 (CDECGAALHKKQLEDHLYTCPEC).

Belongs to the AccD/PCCB family. In terms of assembly, acetyl-CoA carboxylase is a heterohexamer composed of biotin carboxyl carrier protein (AccB), biotin carboxylase (AccC) and two subunits each of ACCase subunit alpha (AccA) and ACCase subunit beta (AccD). The cofactor is Zn(2+).

The protein resides in the cytoplasm. It catalyses the reaction N(6)-carboxybiotinyl-L-lysyl-[protein] + acetyl-CoA = N(6)-biotinyl-L-lysyl-[protein] + malonyl-CoA. It functions in the pathway lipid metabolism; malonyl-CoA biosynthesis; malonyl-CoA from acetyl-CoA: step 1/1. Its function is as follows. Component of the acetyl coenzyme A carboxylase (ACC) complex. Biotin carboxylase (BC) catalyzes the carboxylation of biotin on its carrier protein (BCCP) and then the CO(2) group is transferred by the transcarboxylase to acetyl-CoA to form malonyl-CoA. This is Acetyl-coenzyme A carboxylase carboxyl transferase subunit beta from Chlorobaculum parvum (strain DSM 263 / NCIMB 8327) (Chlorobium vibrioforme subsp. thiosulfatophilum).